Reading from the N-terminus, the 277-residue chain is Ras suppressor protein 1 (277 aa).

Positions 1–24 are disordered; the sequence is MSKSLKKLVEESREKNQPEVDMSD. Ser2 is subject to N-acetylserine. Over residues 7-24 the composition is skewed to basic and acidic residues; it reads KLVEESREKNQPEVDMSD. LRR repeat units lie at residues 41–63, 64–85, 87–109, 110–133, 135–156, 158–179, and 181–202; these read HITQ…AELK, NLEV…ISSL, KLKH…GSLP, ALEV…FFYL, TLRA…IGKL, KLQI…IGEL, and QLKE…LGNL. The interval 250–277 is disordered; the sequence is MQANPEPPKKNNDKSKKISRKPLAAKNR. The segment covering 256-265 has biased composition (basic and acidic residues); that stretch reads PPKKNNDKSK.

Its function is as follows. Potentially plays a role in the Ras signal transduction pathway. Capable of suppressing v-Ras transformation in vitro. This Homo sapiens (Human) protein is Ras suppressor protein 1 (RSU1).